A 447-amino-acid chain; its full sequence is MVYEEVSLKNLKIKNDYKSIELSEISKSDMHKRIKTFGWVDCCRTGKSITFFDLTCQFKSIKCVYEKKIDLTKCTSLTIYGTIQENKSKKENAEFEVLVEKLEIFNDAIAPSFPLNKESSFDTMMKYGHLALRNKQRGFFLKARSSLLKIIRDIFYEGNFIEITPPTIVQTQVEGGSTLFKLKYYDKDAYLTQSSQLYLETVAPVAYRAYCIASSYRAEKSNTTRHLSEYTHVEAELANIEFEDLINNIEHLVTESIKRFYDLLGDEIKDLYPEIKLQNVPKRPFKRIRYVDAIKFLNDEGVKKDDDTDFVVGDDIPDSREKIICERFGKGEPVLMTHFLVEHKPFYMKLDSSNETCTESFDLLYPGIGEIVGGSMRLDNYNKLIDGFKREGLNPEDYDWYLDMARFGPCSHGGYGLGFERLLMALMRYTNIEFATLYPRNTRRCHP.

The protein belongs to the class-II aminoacyl-tRNA synthetase family.

The protein resides in the cytoplasm. The enzyme catalyses tRNA(Asn) + L-asparagine + ATP = L-asparaginyl-tRNA(Asn) + AMP + diphosphate + H(+). In Vairimorpha ceranae (strain BRL01) (Microsporidian parasite), this protein is Probable asparagine--tRNA ligase, cytoplasmic.